A 171-amino-acid chain; its full sequence is Secreted LysM effector Blys4 (171 aa).

One can recognise a LysM domain in the interval 125–169; the sequence is KPYTIHQGDTCWDIAESHSVGVDDILTLNPELDCDKLSIGSQICL.

This sequence belongs to the secreted LysM effector family.

Its function is as follows. Might have a role in sequestration of chitin oligosaccharides (breakdown products of fungal cell walls that are released during invasion and act as triggers of host immunity) to dampen host defense. In Beauveria bassiana (strain ARSEF 2860) (White muscardine disease fungus), this protein is Secreted LysM effector Blys4.